We begin with the raw amino-acid sequence, 633 residues long: Pollen receptor-like kinase 3 (633 aa).

The N-terminal stretch at methionine 1 to serine 19 is a signal peptide. Asparagine 22 and asparagine 37 each carry an N-linked (GlcNAc...) asparagine glycan. An intrachain disulfide couples cysteine 53 to cysteine 62. LRR repeat units follow at residues leucine 90–glycine 115, lysine 117–glutamate 137, threonine 138–leucine 162, alanine 163–asparagine 186, and valine 188–arginine 210. N-linked (GlcNAc...) asparagine glycosylation occurs at asparagine 123. Residues cysteine 224 and cysteine 232 are joined by a disulfide bond. N-linked (GlcNAc...) asparagine glycosylation occurs at asparagine 246. A helical membrane pass occupies residues alanine 249–isoleucine 269. Residues valine 294–asparagine 314 show a composition bias toward basic and acidic residues. Residues valine 294 to glycine 339 form a disordered region. Residues lysine 328–methionine 338 are compositionally biased toward gly residues. Residues lysine 358–leucine 633 form the Protein kinase domain. ATP is bound by residues leucine 364–alanine 372 and lysine 386. Serine 438 bears the Phosphoserine mark. Threonine 458 bears the Phosphothreonine mark. Residue serine 535 is modified to Phosphoserine.

It belongs to the protein kinase superfamily. Ser/Thr protein kinase family. As to quaternary structure, interacts in vitro with ROPGEF1 (via PRONE domain). Interacts with PRK6. As to expression, expressed in pollen and/or in flowers, but not in leaves.

It localises to the membrane. It carries out the reaction L-seryl-[protein] + ATP = O-phospho-L-seryl-[protein] + ADP + H(+). The catalysed reaction is L-threonyl-[protein] + ATP = O-phospho-L-threonyl-[protein] + ADP + H(+). With respect to regulation, the phosphorylation activity is calcium-independent. Its function is as follows. Receptor-like kinase involved in the control of pollen germination and pollen tube polar growth. Can phosphorylate ROPGEF1 in vitro. The chain is Pollen receptor-like kinase 3 from Arabidopsis thaliana (Mouse-ear cress).